Reading from the N-terminus, the 200-residue chain is Lipopolysaccharide core heptose(II)-phosphate phosphatase (200 aa).

The signal sequence occupies residues 1-25; that stretch reads MLAFCRSSLKSKKYIIILLALAAIA.

The protein belongs to the phosphoglycerate mutase family. Ais subfamily.

Its subcellular location is the periplasm. Its pathway is bacterial outer membrane biogenesis; lipopolysaccharide metabolism. Catalyzes the dephosphorylation of heptose(II) of the outer membrane lipopolysaccharide core. The chain is Lipopolysaccharide core heptose(II)-phosphate phosphatase from Escherichia coli (strain ATCC 8739 / DSM 1576 / NBRC 3972 / NCIMB 8545 / WDCM 00012 / Crooks).